Reading from the N-terminus, the 1180-residue chain is Neurexin like receptor 1 (1180 aa).

An N-terminal signal peptide occupies residues 1 to 20; sequence MSGLCLVLLLSIFAVSQSSG. The Extracellular portion of the chain corresponds to 21–1108; sequence ECSDVSFSSV…SQNKQDLVSK (1088 aa). Residues 124–290 form the Laminin G-like 1 domain; the sequence is PITAFDDSSY…LSPNEVHNQC (167 aa). The N-linked (GlcNAc...) asparagine glycan is linked to N229. A disulfide bridge links C267 with C290. N-linked (GlcNAc...) asparagine glycosylation is found at N302, N336, N355, and N436. In terms of domain architecture, EGF-like 1 spans 444-481; sequence FQEKCLPNPCENGGGCVQSALDDYVCNCKEGYKGKNCH. Intrachain disulfides connect C448–C459, C453–C469, and C471–C480. N522 and N636 each carry an N-linked (GlcNAc...) asparagine glycan. Residues 695 to 863 form the Laminin G-like 2 domain; sequence TFDPVTFSNR…GVAIGDDGYC (169 aa). In terms of domain architecture, EGF-like 2 spans 859–896; it reads DDGYCRPDLCQNGGQCVDKYDGYVCDCSMTPFGGSDCT. Intrachain disulfides connect C863–C874, C868–C883, and C885–C895. N933, N949, N978, N997, N1011, and N1052 each carry an N-linked (GlcNAc...) asparagine glycan. A helical transmembrane segment spans residues 1109 to 1129; the sequence is AIIGGGILALSLFILCMSSLI. Over 1130–1180 the chain is Cytoplasmic; sequence CYMRSRPEGVYKTNETGENCSPSRSEEPLVHNTTSNNNNNPTYASNKEYFC. A compositionally biased stretch (polar residues) spans 1142–1152; that stretch reads TNETGENCSPS. The interval 1142-1180 is disordered; that stretch reads TNETGENCSPSRSEEPLVHNTTSNNNNNPTYASNKEYFC. The segment covering 1161-1171 has biased composition (low complexity); that stretch reads NTTSNNNNNPT.

Belongs to the neurexin family. In terms of assembly, interacts (via the intracellular domain) with F-actin; the interaction is required for anchoring F-actin at the membrane for gap junction formation. As to expression, highly expressed in pharyngeal g1 and g2 gland cells, pharyngeal muscle cells and the unilateral GABAergic RIS interneuron (at protein level). Expressed in pm5 pharyngeal muscle cells and the nerve ring.

The protein localises to the cell membrane. Its subcellular location is the cell junction. It is found in the gap junction. Functionally, required for gap junction formation, playing a role in anchoring the cytoskeletal component F-actin to the membrane of adjacent cells and thus facilitating the formation of gap junction channels in embryonic cells, muscle cells and neuronal cells. Plays a role in maintaining gap junction activity to promote pharyngeal muscle contraction. The polypeptide is Neurexin like receptor 1 (Caenorhabditis elegans).